The sequence spans 26 residues: Beta-hexosaminidase (26 aa).

Glycosylated. In terms of tissue distribution, detected in dry seeds and cotyledons.

It carries out the reaction Hydrolysis of terminal non-reducing N-acetyl-D-hexosamine residues in N-acetyl-beta-D-hexosaminides.. Its activity is regulated as follows. Inhibited by AgNO(3) at a concentration of 0.1 mM. Strongly inhibited by CdCl(2), ZnCl(2) and FeCl(3) and moderately by CoCl(2), CuSO(4) and NiCl(2) at 10 mM concentration. CaCl(2), MgCl(2), MnSO(4) and KI also have a slight inhibitory effect of 20%-25% at 10 mM concentration. Activated to a small extent by MgCl(2) at 0.1 mM concentration but inhibited with increasing concentration. Not affected by carbohydrates such as fucose, galactose and glucose but displays a slight decrease in activity up to 25% with lactose, alpha-mannose and N-acetyl-galactosamine (GalNAc). In terms of biological role, has hexosaminidase activity. Active with both p-nitrophenyl-beta-D-N-acetylglucosamine (pNP-GlcNAc) and p-nitrophenyl-beta-D-N-acetylgalactosamine (pNP-GalNAc). Not active toward p-nitrophenyl-beta-D-N,N'-diacetylchitobiose (pNP-(GlcNAc)2) or p-nitrophenyl-beta-D-N,N',N''-triacetylchitobiose (pNP-(GlcNAc)3). Removes terminal GlcNAc and may be involved in storage protein degradation. The sequence is that of Beta-hexosaminidase from Lupinus albus (White lupine).